The chain runs to 250 residues: 2,3-bisphosphoglycerate-dependent phosphoglycerate mutase (250 aa).

Substrate-binding positions include 10 to 17 (RHGESQWN), 23 to 24 (TG), Arg62, 89 to 92 (ERHY), Lys100, 116 to 117 (RR), and 185 to 186 (GN). Residue His11 is the Tele-phosphohistidine intermediate of the active site. The active-site Proton donor/acceptor is Glu89.

This sequence belongs to the phosphoglycerate mutase family. BPG-dependent PGAM subfamily. In terms of assembly, homodimer.

The catalysed reaction is (2R)-2-phosphoglycerate = (2R)-3-phosphoglycerate. Its pathway is carbohydrate degradation; glycolysis; pyruvate from D-glyceraldehyde 3-phosphate: step 3/5. In terms of biological role, catalyzes the interconversion of 2-phosphoglycerate and 3-phosphoglycerate. The protein is 2,3-bisphosphoglycerate-dependent phosphoglycerate mutase of Escherichia coli O139:H28 (strain E24377A / ETEC).